Here is a 507-residue protein sequence, read N- to C-terminus: Hippocampus abundant transcript-like protein 1 (507 aa).

The tract at residues 1–27 (MSTDGESPEEPRWKAVASPKASTMPEK) is disordered. Residues 1-51 (MSTDGESPEEPRWKAVASPKASTMPEKRGSAQAASGSWLQGFGHPSVYHAA) lie on the Extracellular side of the membrane. The chain crosses the membrane as a helical span at residues 52 to 72 (FVIFLEFFAWGLLTTPMLTVL). The Cytoplasmic segment spans residues 73–84 (HETFPQHTFLMN). Residues 85 to 105 (GLIQGVKGLLSFLSAPLIGAL) form a helical membrane-spanning segment. The Extracellular portion of the chain corresponds to 106–113 (SDVWGRKP). Residues 114–134 (FLLGTVFFTCFPIPLMRINPW) form a helical membrane-spanning segment. Residues 135–136 (WY) are Cytoplasmic-facing. A helical transmembrane segment spans residues 137–157 (FGMISVSGVFSVTFSVIFAYV). Over 158–170 (ADFTQEHERSTAY) the chain is Extracellular. Residues 171–191 (GWVSATFAASLVSSPAIGTYL) traverse the membrane as a helical segment. Residues 192 to 198 (SANYGDS) lie on the Cytoplasmic side of the membrane. Residues 199-219 (LVVLVATLVALLDICFILIAV) traverse the membrane as a helical segment. Over 220–257 (PESLSEKIRPASWGAQISWKQADPFASLKKVGKDSTVL) the chain is Extracellular. A helical transmembrane segment spans residues 258 to 278 (LICITVFLSYLPEAGQYSSFF). The Cytoplasmic segment spans residues 279-283 (LYLRQ). A helical membrane pass occupies residues 284 to 304 (VIGFGSVKIVAFIAMVGILSI). The Extracellular segment spans residues 305 to 323 (VAQTVFLSKLMRSLGNKNT). Residues 324–344 (VLLGLGFQMLQLAWYGFGSQA) form a helical membrane-spanning segment. The Cytoplasmic segment spans residues 345 to 347 (WMM). Residues 348-368 (WAAGTVAAMSSITFPAVSALI) form a helical membrane-spanning segment. Over 369 to 389 (SRNAESDQQGVAQGIVTGIRG) the chain is Extracellular. Residues 390-410 (LCNGLGPALYGFIFYMFHVEL) traverse the membrane as a helical segment. Residues 411–430 (SELGPKLNSDDDPLQGAFIP) are Cytoplasmic-facing. The chain crosses the membrane as a helical span at residues 431-451 (GPPFLFGACIVLMSFLVALFI). The Extracellular portion of the chain corresponds to 452-507 (PEYRKTSGVQKHNNSTSGSLSTPPERGSDEDIEPLLQDSSIWELSFEEPGNQCTEL). Over residues 459–473 (GVQKHNNSTSGSLST) the composition is skewed to polar residues. The interval 459–483 (GVQKHNNSTSGSLSTPPERGSDEDI) is disordered. N-linked (GlcNAc...) asparagine glycosylation is found at Asn-464 and Asn-465.

It belongs to the major facilitator superfamily.

It localises to the membrane. The polypeptide is Hippocampus abundant transcript-like protein 1 (Mus musculus (Mouse)).